A 354-amino-acid polypeptide reads, in one-letter code: 5,10-methenyltetrahydromethanopterin hydrogenase (354 aa).

This sequence belongs to the HMD family.

The enzyme catalyses 5,10-methenyl-5,6,7,8-tetrahydromethanopterin + H2 = 5,10-methylenetetrahydromethanopterin + H(+). It functions in the pathway one-carbon metabolism; methanogenesis from CO(2); 5,10-methylene-5,6,7,8-tetrahydromethanopterin from 5,10-methenyl-5,6,7,8-tetrahydromethanopterin (hydrogen route): step 1/1. Functionally, catalyzes the reversible reduction of methenyl-H(4)MPT(+) to methylene-H(4)MPT. This chain is 5,10-methenyltetrahydromethanopterin hydrogenase, found in Methanococcus maripaludis (strain DSM 14266 / JCM 13030 / NBRC 101832 / S2 / LL).